Consider the following 316-residue polypeptide: METSLPITVVFLIVLITGAQTKPTQGSCTLTDEDISDIKSAVQKASKAAVNDIVLDPTLIDKCPMLEKITASLKSVATEIVQMRDSAISTDQVDQLKQNFEDQVNQIVKSRDIFEKQSGTQATKEHGEMLERMTALQVKVTELEQQIAKQTASMYEDMAELIFQRLQMNSTESVRSYTKHMMEEKLEELMNKLETNYRIYLGALRFLNHMNDQELIGKVFDGILKRLGDMKADSDDVKENGRNLLVNLLCWTVNNDFLGKKYKERQVDLYRMALKFYPKTYEKAANEADVRSRQFCEENFPANLITWFAVSWNDRG.

Positions 1–21 (METSLPITVVFLIVLITGAQT) are cleaved as a signal peptide. An involved in interaction with human CD47 region spans residues 126–316 (HGEMLERMTA…WFAVSWNDRG (191 aa)). Asparagine 169 is a glycosylation site (N-linked (GlcNAc...) asparagine).

In terms of assembly, interacts with human CD4. Interacts with human CD47; the interaction results in inhibition of phagocytosis activity of host macrophages. In terms of tissue distribution, female salivary gland (at protein level). Saliva (at protein level). Some expression in ovary and midgut (at protein level).

It is found in the secreted. In terms of biological role, activates host neutrophils; induces expression of IL1B and CXCL2 at the bite site. Promotes activation of human CD4(+) T-cells. Inhibits phagocytosis activity of host macrophages via the interaction with CD47 receptor on their surface. Suppresses expression of pro-inflammatory cytokines, such as IFN-gamma/IFNG, IL2, TNF-alpha/TNF, IL12B, IL8/CXCL8, IL6, in host white blood cells. Reduces host polymorphonuclear neutrophil chemotaxis induced by N-formylmethionine-leucylphenylalanine (fMLF). Reduces CD11b/ITGAM expression in fMLF-induced host polymorphonuclear neutrophils. Its function is as follows. (Microbial infection) Enhances early replication of Zika virus in the host. This chain is Neutrophil-stimulating factor 1, found in Aedes aegypti (Yellowfever mosquito).